We begin with the raw amino-acid sequence, 478 residues long: Cytochrome c-552 (478 aa).

A signal peptide spans 1-26 (MARKTLRARRFFSLIFPFFFITSVYA). His94 lines the heme c pocket. The heme site is built by Cys122, Cys125, and Lys126. Heme c-binding residues include Cys160, Cys163, His164, Cys209, Cys212, and His213. Positions 215, 216, 261, and 263 each coordinate Ca(2+). Tyr216 serves as a coordination point for substrate. His264 is a binding site for substrate. The heme c site is built by His275, Cys282, Cys285, His286, His301, Cys314, Cys317, His318, and His393.

This sequence belongs to the cytochrome c-552 family. Ca(2+) is required as a cofactor. Requires heme c as cofactor.

The protein resides in the periplasm. The enzyme catalyses 6 Fe(III)-[cytochrome c] + NH4(+) + 2 H2O = 6 Fe(II)-[cytochrome c] + nitrite + 8 H(+). It functions in the pathway nitrogen metabolism; nitrate reduction (assimilation). In terms of biological role, catalyzes the reduction of nitrite to ammonia, consuming six electrons in the process. The protein is Cytochrome c-552 of Salmonella paratyphi C (strain RKS4594).